The following is a 471-amino-acid chain: Putative F-box protein At5g36200 (471 aa).

The F-box domain occupies 1 to 46; sequence MAMSDLPNDLVEEIISRVPVKSIRAVSSTCKNWNTLSNDHSFTRKL.

This chain is Putative F-box protein At5g36200, found in Arabidopsis thaliana (Mouse-ear cress).